Here is a 115-residue protein sequence, read N- to C-terminus: SPbeta prophage-derived uncharacterized membrane protein YosE (115 aa).

Transmembrane regions (helical) follow at residues 20–42 (IVVGLLIFVEALTMSLIVYYGLN), 58–78 (VHVTLPHAFVIGVLLNVFVKG), and 95–115 (GKSLFHSTFALIVLYVSTLFI).

Its subcellular location is the cell membrane. This Bacillus subtilis (strain 168) protein is SPbeta prophage-derived uncharacterized membrane protein YosE (yosE).